A 249-amino-acid polypeptide reads, in one-letter code: Aquaporin TIP4-1 (249 aa).

Position 1 is an N-acetylmethionine (M1). The Cytoplasmic segment spans residues 1–20 (MKKIELGHHSEAAKPDCIKA). At K3 the chain carries N6,N6-dimethyllysine. A helical membrane pass occupies residues 21-41 (LIVEFITTFLFVFAGVGSAMA). Residues 42–49 (TDSLVGNT) lie on the Vacuolar side of the membrane. Residues 50-70 (LVGLFAVAVAHAFVVAVMISA) traverse the membrane as a helical segment. The Cytoplasmic portion of the chain corresponds to 71–105 (GHISGGHLNPAVTLGLLLGGHISVFRAFLYWIDQL). Residues 79–81 (NPA) carry the NPA 1 motif. Residues 106-126 (LASSAACFLLSYLTGGMGTPV) form a helical membrane-spanning segment. Topologically, residues 127 to 137 (HTLASGVSYTQ) are vacuolar. Residues 138–158 (GIIWEIILTFSLLFTVYATIV) traverse the membrane as a helical segment. At 159 to 166 (DPKKGSLD) the chain is on the cytoplasmic side. A helical transmembrane segment spans residues 167–187 (GFGPLLTGFVVGANILAGGAF). Topologically, residues 188–212 (SGASMNPARSFGPALVSGNWTDHWV) are vacuolar. The NPA 2 motif lies at 193 to 195 (NPA). Residues 213 to 233 (YWVGPLIGGGLAGFIYENVLI) traverse the membrane as a helical segment. Residues 234–249 (DRPHVPVADDEQPLLN) are Cytoplasmic-facing.

It belongs to the MIP/aquaporin (TC 1.A.8) family. TIP (TC 1.A.8.10) subfamily. As to expression, expressed in roots.

The protein resides in the vacuole membrane. Functionally, aquaporins facilitate the transport of water and small neutral solutes across cell membranes. Transports urea in yeast cells in a pH-independent manner. The sequence is that of Aquaporin TIP4-1 (TIP4-1) from Arabidopsis thaliana (Mouse-ear cress).